Here is an 837-residue protein sequence, read N- to C-terminus: Protein translocase subunit SecA (837 aa).

ATP-binding positions include glutamine 85, glycine 103–threonine 107, and aspartate 493. Positions 821, 823, 832, and 833 each coordinate Zn(2+).

Belongs to the SecA family. In terms of assembly, monomer and homodimer. Part of the essential Sec protein translocation apparatus which comprises SecA, SecYEG and auxiliary proteins SecDF. Other proteins may also be involved. Requires Zn(2+) as cofactor.

The protein localises to the cell membrane. The protein resides in the cytoplasm. It carries out the reaction ATP + H2O + cellular proteinSide 1 = ADP + phosphate + cellular proteinSide 2.. In terms of biological role, part of the Sec protein translocase complex. Interacts with the SecYEG preprotein conducting channel. Has a central role in coupling the hydrolysis of ATP to the transfer of proteins into and across the cell membrane, serving as an ATP-driven molecular motor driving the stepwise translocation of polypeptide chains across the membrane. The chain is Protein translocase subunit SecA from Streptococcus pneumoniae serotype 2 (strain D39 / NCTC 7466).